The chain runs to 361 residues: Peptide chain release factor 1 (361 aa).

Residue glutamine 235 is modified to N5-methylglutamine.

It belongs to the prokaryotic/mitochondrial release factor family. Methylated by PrmC. Methylation increases the termination efficiency of RF1.

Its subcellular location is the cytoplasm. Its function is as follows. Peptide chain release factor 1 directs the termination of translation in response to the peptide chain termination codons UAG and UAA. The sequence is that of Peptide chain release factor 1 from Xanthomonas oryzae pv. oryzae (strain MAFF 311018).